Consider the following 157-residue polypeptide: Ribosomal RNA large subunit methyltransferase H (157 aa).

S-adenosyl-L-methionine-binding positions include Leu-75, Gly-106, and Phe-125–Phe-130.

This sequence belongs to the RNA methyltransferase RlmH family. As to quaternary structure, homodimer.

Its subcellular location is the cytoplasm. The enzyme catalyses pseudouridine(1915) in 23S rRNA + S-adenosyl-L-methionine = N(3)-methylpseudouridine(1915) in 23S rRNA + S-adenosyl-L-homocysteine + H(+). Functionally, specifically methylates the pseudouridine at position 1915 (m3Psi1915) in 23S rRNA. The chain is Ribosomal RNA large subunit methyltransferase H from Malacoplasma penetrans (strain HF-2) (Mycoplasma penetrans).